We begin with the raw amino-acid sequence, 297 residues long: tRNA dimethylallyltransferase (297 aa).

15 to 22 contributes to the ATP binding site; it reads GPTASGKS. 17–22 is a substrate binding site; the sequence is TASGKS. 2 interaction with substrate tRNA regions span residues 40–43 and 164–168; these read DSMQ and QRIVR.

This sequence belongs to the IPP transferase family. Monomer. It depends on Mg(2+) as a cofactor.

It catalyses the reaction adenosine(37) in tRNA + dimethylallyl diphosphate = N(6)-dimethylallyladenosine(37) in tRNA + diphosphate. Functionally, catalyzes the transfer of a dimethylallyl group onto the adenine at position 37 in tRNAs that read codons beginning with uridine, leading to the formation of N6-(dimethylallyl)adenosine (i(6)A). This Rhizobium leguminosarum bv. trifolii (strain WSM2304) protein is tRNA dimethylallyltransferase.